A 425-amino-acid chain; its full sequence is MYDAIVVGGGFSGLKAARDLTNAGKKVLLLEGGERLGGRAYSRESRNVPGLRVEIGGAYLHRKHHPRLAAELDRYGIPTAAASEFTSFRHRLGPTAVDQAFPIPGSEAVAVEAATYTLLRDAHRIDLEKGLENQDLEDLDIPLNEYVDKLDLPPVSRQFLLAWAWNMLGQPADQASALWMLQLVAAHHYSILGVVLSLDEVFSNGSADLVDAMSQEIPEIRLQTVVTGIDQSGDVVNVTVKDGHAFQAHSVIVATPMNTWRRIVFTPALPERRRSVIEEGHGGQGLKILIHVRGAEAGIECVGDGIFPTLYDYCEVSESERLLVAFTDSGSFDPTDIGAVKDAVLYYLPEVEVLGIDYHDWIADPLFEGPWVAPRVGQFSRVHKELGEPAGRIHFVGSDVSLEFPGYIEGALETAECAVNAILHS.

FAD contacts are provided by residues S12, E31, 38–39 (GR), and 56–59 (GGAY). Residue N166 participates in (S)-6-hydroxynicotine binding. V226 is a binding site for FAD. (S)-6-hydroxynicotine-binding residues include Y311, F326, and W371. FAD contacts are provided by residues S398 and 406 to 408 (GYI). (S)-6-hydroxynicotine is bound at residue Y407.

The protein belongs to the flavin monoamine oxidase family. In terms of assembly, homodimer. It depends on FAD as a cofactor.

It is found in the cytoplasm. The catalysed reaction is (S)-6-hydroxynicotine + O2 + H2O = 6-hydroxypseudooxynicotine + H2O2. It catalyses the reaction (S)-6-hydroxynicotine + O2 = 6-hydroxy-N-methylmyosmine + H2O2. Its pathway is alkaloid degradation; nicotine degradation; 6-hydroxypseudooxynicotine from nicotine (S-isomer route): step 2/2. Its activity is regulated as follows. Inhibited by (R)-6-hydroxynicotine. Inhibited by high concentrations of phenanthroline. Activity is strongly affected by Hg(2+) and p-chloromercuriphenylsulfonate, but not by N-ethylmaleimide and 5,5'-dithiobis-(2-nitrobenzoate). In terms of biological role, involved in the degradation of L-nicotine. Catalyzes the oxidation of (S)-6-hydroxynicotine (6-hydroxy-L-nicotine) to 6-hydroxypseudooxynicotine. Oxidation of the pyrrolidine ring of (S)-6-hydroxynicotine leads to the formation of the optically inactive 6-hydroxy-N-methylmyosmine, which hydrolyzes spontaneously to 6-hydroxypseudooxynicotine. Acts with absolute stereospecificity on the L-form of 6-hydroxynicotine. Can also use (S)-6-hydroxynornicotine. This Paenarthrobacter nicotinovorans (Arthrobacter nicotinovorans) protein is (S)-6-hydroxynicotine oxidase.